Consider the following 1630-residue polypeptide: Merozoite surface protein 1 (1630 aa).

The signal sequence occupies residues 1 to 19 (MKIIFFLCSFLFFIINTQC). The disordered stretch occupies residues 60–113 (TKGASAQSGTSGTSGTSGPSGPSGTSPSSRSNTLPRSNTSSGASPPADASDSDA). A tripeptide SG(TP) repeat region spans residues 67-84 (SGTSGTSGTSGPSGPSGT). Positions 67–88 (SGTSGTSGTSGPSGPSGTSPSS) are enriched in low complexity. Residues 89 to 98 (RSNTLPRSNT) are compositionally biased toward polar residues. Residue asparagine 97 is glycosylated (N-linked (GlcNAc...) asparagine). The span at 99–108 (SSGASPPADA) shows a compositional bias: low complexity. Asparagine 259 is a glycosylation site (N-linked (GlcNAc...) asparagine). The disordered stretch occupies residues 680-755 (KKNIKTEGQS…VPTPPAPVNN (76 aa)). Polar residues-rich tracts occupy residues 685–695 (TEGQSDNSEPS) and 702–713 (GQATTKPGQQAG). Over residues 721-732 (VQAQAQEQKQAQ) the composition is skewed to low complexity. N-linked (GlcNAc...) asparagine glycosylation is found at asparagine 755, asparagine 759, asparagine 774, and asparagine 835. Residues 884-906 (SMQPLSLTPQDKPEVSANDDTSH) form a disordered region. N-linked (GlcNAc...) asparagine glycans are attached at residues asparagine 911, asparagine 955, asparagine 1049, asparagine 1156, and asparagine 1165. A required for binding to host erythrocyte cell membrane region spans residues 993–1107 (QLSFDLYNKY…EESIQTEDNY (115 aa)). A compositionally biased stretch (polar residues) spans 1190-1203 (VSESGSDTLEQSQP). The disordered stretch occupies residues 1190 to 1220 (VSESGSDTLEQSQPKKPASTHVGAESNTITT). 2 N-linked (GlcNAc...) asparagine glycosylation sites follow: asparagine 1436 and asparagine 1517. 2 EGF-like domains span residues 1521–1561 (HQCV…VENP) and 1562–1610 (NPTC…FCSS). Cystine bridges form between cysteine 1523-cysteine 1534, cysteine 1528-cysteine 1544, cysteine 1546-cysteine 1557, cysteine 1565-cysteine 1578, cysteine 1572-cysteine 1592, and cysteine 1594-cysteine 1608. A lipid anchor (GPI-anchor amidated serine) is attached at serine 1609. The propeptide at 1610–1630 (SSNFLGISFLLILMLILYSFI) is removed in mature form.

As to quaternary structure, forms a complex composed of subunits p83, p30, p38, and p42 which remain non-covalently associated; the complex is formed at the merozoite surface prior to egress from host erythrocytes. Forms a complex composed of processed MSP1 subunits, MSP6 subunit p36 and MSP7; the complex is formed at the merozoite surface prior to egress from host erythrocytes. Within the complex, interacts (via subunit p38) with MSP6 subunit p36 and (via subunits p83, p30 and p38) with MSP7 (via subunit p22). Forms a complex composed of MSP1, MSP6, DBLMSP1 and DBLMSP2. Within the complex, interacts (via subunit p38) with DBLMSP1 and DBLMSP2. Forms a complex composed of MSP1, and rhoptry proteins RhopH3, RAP1 and CLAG9/RhopH3. Within the complex, interacts (via subunits p42 and p19) with RhopH3 (via C-terminus). Forms a complex composed of MSP1, MSP6, MSP7, MSP9 and MSP3; within the complex, MSP6 and MSP9 mediate the binding to the host erythrocyte. Interacts (via subunits p19 and p42) with MSP9; the interaction is direct; MSP1 subunits p19 or p42, and MSP9 form a co-ligand complex that interacts with host SLC4A1/Band 3 protein. May interact with PFD6. Interacts with host spectrin. Interacts with host glycophorin GYPA in a sialic acid-independent manner. In terms of assembly, interacts with host proinflammatory cytokine S100P; the interaction blocks S100P inflammatory and chemotactic activities. As to quaternary structure, interacts with host SLC4A1/Band 3 (via 5ABC region) on the host erythrocyte surface in a sialic acid-independent manner. Post-translationally, the p190 precursor is cleaved by SUB1 prior to merozoite egress into 4 subunits p83, p30, p38, and p42 which remain non-covalently associated. SUB1-mediated proteolytic cleavage occurs in an orderly manner; the first cleavage occurs at the p83/p30 site, followed by cleavage at the p30/p38 site, the last cleavage occurs at the p38/p42 site. The order of cleavage is essential for parasite viability. SUB1-mediated processing is essential for merozoite egress. In a second processing step during erythrocyte invasion, p42 is cleaved by SUB2 into p33 and p19; the latter remains attached to the merozoite surface via its GPI-anchor and stays on the surface during the subsequent ring stage.

Its subcellular location is the cell membrane. The protein localises to the secreted. It is found in the vacuole membrane. In terms of biological role, during the asexual blood stage, involved in merozoite egress from host erythrocytes possibly via its interaction with the host cytoskeleton protein spectrin resulting in the destabilization of the host cytoskeleton and thus leading to erythrocyte cell membrane rupture. Involved in the binding to host erythrocytes and is required for host erythrocyte invasion. By binding to host proinflammatory cytokine S100P may interfere with host immune responses. Its function is as follows. Involved in merozoite invasion of host erythrocytes. May play a role in the biogenesis and/or function of the food vacuole during the intraerythrocytic development. The polypeptide is Merozoite surface protein 1 (Plasmodium falciparum (isolate K1 / Thailand)).